A 500-amino-acid polypeptide reads, in one-letter code: UDP-N-acetylmuramoyl-L-alanyl-D-glutamate--2,6-diaminopimelate ligase (500 aa).

Ser-32 contributes to the UDP-N-acetyl-alpha-D-muramoyl-L-alanyl-D-glutamate binding site. 117-123 (GTNGKTT) lines the ATP pocket. UDP-N-acetyl-alpha-D-muramoyl-L-alanyl-D-glutamate is bound by residues 159 to 160 (TT), Ser-186, Gln-192, and Arg-194. Lys-226 bears the N6-carboxylysine mark. Residues Arg-395, 419–422 (DNPR), Gly-470, and Glu-474 each bind meso-2,6-diaminopimelate. The Meso-diaminopimelate recognition motif signature appears at 419–422 (DNPR).

It belongs to the MurCDEF family. MurE subfamily. Mg(2+) is required as a cofactor. Carboxylation is probably crucial for Mg(2+) binding and, consequently, for the gamma-phosphate positioning of ATP.

The protein resides in the cytoplasm. The catalysed reaction is UDP-N-acetyl-alpha-D-muramoyl-L-alanyl-D-glutamate + meso-2,6-diaminopimelate + ATP = UDP-N-acetyl-alpha-D-muramoyl-L-alanyl-gamma-D-glutamyl-meso-2,6-diaminopimelate + ADP + phosphate + H(+). Its pathway is cell wall biogenesis; peptidoglycan biosynthesis. Its function is as follows. Catalyzes the addition of meso-diaminopimelic acid to the nucleotide precursor UDP-N-acetylmuramoyl-L-alanyl-D-glutamate (UMAG) in the biosynthesis of bacterial cell-wall peptidoglycan. The protein is UDP-N-acetylmuramoyl-L-alanyl-D-glutamate--2,6-diaminopimelate ligase of Parasynechococcus marenigrum (strain WH8102).